Consider the following 319-residue polypeptide: Acetyl esterase (319 aa).

Residues 91-93 (HGG) carry the Involved in the stabilization of the negatively charged intermediate by the formation of the oxyanion hole motif. Residues Ser165, Asp262, and His292 contribute to the active site.

It belongs to the 'GDXG' lipolytic enzyme family. In terms of assembly, homodimer. Interacts with MalT and MelA.

Its subcellular location is the cytoplasm. Displays esterase activity towards short chain fatty esters (acyl chain length of up to 8 carbons). Able to hydrolyze triacetylglycerol (triacetin) and tributyrylglycerol (tributyrin), but not trioleylglycerol (triolein) or cholesterol oleate. Negatively regulates MalT activity by antagonizing maltotriose binding. Inhibits MelA galactosidase activity. This Escherichia coli O8 (strain IAI1) protein is Acetyl esterase.